Here is a 481-residue protein sequence, read N- to C-terminus: Beta-amyrin 16-beta-monooxygenase (481 aa).

A helical membrane pass occupies residues 4 to 24 (LFIIISLVIVILTTIFILSNL). C428 serves as a coordination point for heme.

The protein belongs to the cytochrome P450 family. The cofactor is heme. As to expression, highly expressed in roots. Expressed at very low levels in leaves and petals.

It is found in the membrane. It carries out the reaction beta-amyrin + reduced [NADPH--hemoprotein reductase] + O2 = maniladiol + oxidized [NADPH--hemoprotein reductase] + H2O + H(+). The enzyme catalyses oleanolate + reduced [NADPH--hemoprotein reductase] + O2 = cochalate + oxidized [NADPH--hemoprotein reductase] + H2O + H(+). Its function is as follows. Involved in triterpenoid saponin biosynthesis in roots. Catalyzes the hydroxylation of beta-amyrin at the C-16 beta position to form maniladiol. Is also able to oxidize oleanolat to cochalate. Has weak activity catalyzing the three-step oxidation at C-28 of beta-amyrin to form oleanolate. The polypeptide is Beta-amyrin 16-beta-monooxygenase (Platycodon grandiflorus (Balloon flower)).